Here is a 108-residue protein sequence, read N- to C-terminus: Small ribosomal subunit protein uS10 (108 aa).

This sequence belongs to the universal ribosomal protein uS10 family. As to quaternary structure, part of the 30S ribosomal subunit.

In terms of biological role, involved in the binding of tRNA to the ribosomes. The polypeptide is Small ribosomal subunit protein uS10 (Ehrlichia canis (strain Jake)).